The following is a 232-amino-acid chain: Large ribosomal subunit protein uL1 (232 aa).

This sequence belongs to the universal ribosomal protein uL1 family. In terms of assembly, part of the 50S ribosomal subunit.

In terms of biological role, binds directly to 23S rRNA. The L1 stalk is quite mobile in the ribosome, and is involved in E site tRNA release. Its function is as follows. Protein L1 is also a translational repressor protein, it controls the translation of the L11 operon by binding to its mRNA. This Bacillus cereus (strain ATCC 14579 / DSM 31 / CCUG 7414 / JCM 2152 / NBRC 15305 / NCIMB 9373 / NCTC 2599 / NRRL B-3711) protein is Large ribosomal subunit protein uL1.